The chain runs to 1045 residues: Protein madd-4 (1045 aa).

The first 23 residues, Met1–Ala23, serve as a signal peptide directing secretion. 5 TSP type-1 domains span residues Leu24–Glu71, Arg236–Ser292, Ser294–Pro510, Phe512–Ala572, and Thr576–Ser635. 3 disulfides stabilise this stretch: Cys35-Cys65, Cys39-Cys70, and Cys50-Cys55. N-linked (GlcNAc...) asparagine glycosylation is found at Asn268 and Asn280. An Ig-like C2-type domain is found at Pro637 to Thr732. Cys674 and Cys722 are oxidised to a cystine. Residues Asn730 and Asn781 are each glycosylated (N-linked (GlcNAc...) asparagine). The 63-residue stretch at Arg811–Pro873 folds into the TSP type-1 6 domain. N-linked (GlcNAc...) asparagine glycosylation is found at Asn899 and Asn906. Residues Cys932–Pro990 enclose the TSP type-1 7 domain. Residues Arg1004–Glu1041 enclose the PLAC domain.

Interacts with eva-1 (via the SUEL-type lectin domain). Interacts with unc-5. Interacts with unc-40; the interaction is required for the localization of unc-40 to postsynaptic domains. Isoform a forms homodimers and heterodimers with isoform b. Isoform b forms homodimers and heterodimers with isoform a. Isoform b interacts with nlg-1 (via extracellular domain); the interaction is required for nlg-1 localization to postsynaptic domains. Isoform b interacts (via the Ig-like C2-type domain) with nrx-1 (via C-terminus). In terms of tissue distribution, isoform a: Expressed in the commissural GABAergic and cholinergic motor neurons in the first larval stage but only in the cholinergic motor neurons in later larval stages and in adult animals. At the L1 larval stage, mainly localized at the nerve ring and at the dorsal cord. Isoform b: Expressed in the commissural GABAergic and cholinergic motor neurons whose cell bodies reside in the ventral nerve cord and which extend axons into the ventral and dorsal nerve cord. Also expressed in the head neurons RIA, RIC, lateral IL1s, lateral IL2s, OLLs, RMEs and SABs, all of which extend axons into the nerve ring. Expressed in the embryogenic blast cells and the corresponding terminally differentiated ventral cord motor neurons and head neurons.

It is found in the cell projection. It localises to the axon. The protein localises to the secreted. Its subcellular location is the synapse. The protein resides in the extracellular space. It is found in the extracellular matrix. Component of an extracellular matrix cue that is involved in the guidance of dorsoventral midline migrations and in the specification of postsynaptic domains at neuromuscular junctions (NMJs). Acts as a ligand for the netrin receptor unc-40 and the neuroligin receptor nlg-1. Secreted by the dorsal and ventral nerve cords to attract sensory axons and muscle membrane extensions called muscle arms. In parallel with unc-6 and slt-1, involved in the netrin receptor unc-40 dependent guidance of the AVM and PVM mechanosensory axons along the dorsal-ventral axis. The unc-40 coreceptor eva-1 is enhancing the responsiveness of unc-40 to the madd-4 guidance cue to attract the muscle arm extensions and AVM mechanosensory axons towards the dorsoventral midline. Acts as a synaptic organizer and is required for the specification of inhibitory GABAergic and excitatory cholinergic identities of postsynaptic domains at neuromuscular junctions (NMJs). Required for the recruitment of unc-40 to both cholinergic and GABAergic NMJs. Promotes the clustering of ACh receptors and GABA(A) receptors at postsynaptic sites during synaptogenesis. The binding to the presynaptic adhesion protein nrx-1 and to the neuroligin nlg-1 at postsynaptic sites promotes clustering of GABAergic receptors at postsynaptic NMJs, thereby contributing to normal GABAergic synaptic transmission. Its function is as follows. Isoform a and isoform c: Promotes the clustering of acetylcholine receptors (AChR) at excitatory cholinergic synapses of NMJs via the netrin receptor unc-40. In terms of biological role, acts as a guidance cue in the attraction of muscle membrane extensions (muscle arms) to the dorsal cord and in cooperation with unc-6 to the ventral cord via the netrin receptor unc-40 and via the unc-40 coreceptor eva-1. Together with nrx-1, clusters netrin receptor unc-40 and neuroligin nlg-1 at postsynaptic sites of GABAergic NMJs, thereby promoting the recruitment of GABA(A) receptors at GABAergic synapses. Prevents the recruitment of GABAergic receptors to cholinergic synapses. This chain is Protein madd-4, found in Caenorhabditis elegans.